The sequence spans 426 residues: Serine--tRNA ligase (426 aa).

Residue 233–235 (TAE) coordinates L-serine. Residue 264–266 (RSE) coordinates ATP. Glu287 is a binding site for L-serine. 351–354 (EISS) lines the ATP pocket. Ser387 is an L-serine binding site.

This sequence belongs to the class-II aminoacyl-tRNA synthetase family. Type-1 seryl-tRNA synthetase subfamily. In terms of assembly, homodimer. The tRNA molecule binds across the dimer.

It localises to the cytoplasm. The catalysed reaction is tRNA(Ser) + L-serine + ATP = L-seryl-tRNA(Ser) + AMP + diphosphate + H(+). It catalyses the reaction tRNA(Sec) + L-serine + ATP = L-seryl-tRNA(Sec) + AMP + diphosphate + H(+). It participates in aminoacyl-tRNA biosynthesis; selenocysteinyl-tRNA(Sec) biosynthesis; L-seryl-tRNA(Sec) from L-serine and tRNA(Sec): step 1/1. Its function is as follows. Catalyzes the attachment of serine to tRNA(Ser). Is also able to aminoacylate tRNA(Sec) with serine, to form the misacylated tRNA L-seryl-tRNA(Sec), which will be further converted into selenocysteinyl-tRNA(Sec). This chain is Serine--tRNA ligase, found in Pseudomonas syringae pv. tomato (strain ATCC BAA-871 / DC3000).